We begin with the raw amino-acid sequence, 534 residues long: High-affinity nicotinic acid transporter (534 aa).

Topologically, residues 1-130 (MSNKFTMESP…DIHLVGTQYN (130 aa)) are extracellular. Positions 21-56 (SPTNDGSEEKPTEVTFQEDEGHDASLHNRSHDKKSE) are disordered. Ser27 is subject to Phosphoserine. A helical transmembrane segment spans residues 131 to 151 (TCVTVFFATYVLFDPIGTNLL). Lys152 is a topological domain (cytoplasmic). A helical transmembrane segment spans residues 153 to 173 (IMGPPLMMSICLTCFGAISLG). Over 174–187 (TAWVKNYAQLIVVR) the chain is Extracellular. Residues 188 to 208 (LLLGAFEGMIYPAINMYLSVC) form a helical membrane-spanning segment. The Cytoplasmic portion of the chain corresponds to 209–217 (YRREQYALR). The chain crosses the membrane as a helical span at residues 218–238 (FAFVFSAACLSSSFGGLIAYG). At 239–250 (CSKISGSLKDWQ) the chain is on the extracellular side. Residues 251 to 271 (YIYIVEGCISLGFVPFYAFGL) traverse the membrane as a helical segment. Over 272–323 (SKNLEDSWFFNKEEKEYISERYKTMNTFDPDEKFEWFQVWQAVKDVKTWASA) the chain is Cytoplasmic. Lys283 participates in a covalent cross-link: Glycyl lysine isopeptide (Lys-Gly) (interchain with G-Cter in ubiquitin). A helical transmembrane segment spans residues 324–344 (VALFGIDLTTFGLTVFLPIII). The Extracellular segment spans residues 345-355 (TSMGFTNVRAQ). A helical membrane pass occupies residues 356-376 (LMTVPIYFLTAIVFFICAVWS). The Cytoplasmic portion of the chain corresponds to 377-384 (DRIKLRSP). The helical transmembrane segment at 385–405 (FILGACLTTSIGIAIVLGSQV) threads the bilayer. Topologically, residues 406-410 (HGVRY) are extracellular. The helical transmembrane segment at 411–431 (FGVYILCMGIYVNAACNCLWL) threads the bilayer. The Cytoplasmic segment spans residues 432 to 444 (SGNTGNYFKRATA). Residues 445-465 (LGINLFFGSGSGLVSGQIFVA) form a helical membrane-spanning segment. Residues 466–474 (KDKPRYIKG) lie on the Extracellular side of the membrane. A helical transmembrane segment spans residues 475–495 (LSISLAFQVFSIFMTVVQIFL). Residues 496 to 534 (YKRENDKKKAIIDRCNELGEPIPYDERLSDKNPEFKYMY) lie on the Cytoplasmic side of the membrane.

Belongs to the major facilitator superfamily. Allantoate permease family.

It is found in the membrane. In terms of biological role, involved in the uptake of nicotinic acid. This Saccharomyces cerevisiae (strain ATCC 204508 / S288c) (Baker's yeast) protein is High-affinity nicotinic acid transporter (TNA1).